The sequence spans 454 residues: N-lysine methyltransferase setd6 (454 aa).

The SET domain occupies 38 to 265; it reads PKVYISTEGT…AGQELFNTYG (228 aa).

Belongs to the class V-like SAM-binding methyltransferase superfamily. Histone-lysine methyltransferase family. SETD6 subfamily.

It localises to the nucleus. Its function is as follows. Protein-lysine N-methyltransferase. The protein is N-lysine methyltransferase setd6 (setd6) of Xenopus tropicalis (Western clawed frog).